Consider the following 490-residue polypeptide: UDP-N-acetylmuramate--L-alanine ligase (490 aa).

Position 126-132 (126-132 (GTHGKTT)) interacts with ATP.

Belongs to the MurCDEF family.

It localises to the cytoplasm. The enzyme catalyses UDP-N-acetyl-alpha-D-muramate + L-alanine + ATP = UDP-N-acetyl-alpha-D-muramoyl-L-alanine + ADP + phosphate + H(+). Its pathway is cell wall biogenesis; peptidoglycan biosynthesis. Cell wall formation. The chain is UDP-N-acetylmuramate--L-alanine ligase from Baumannia cicadellinicola subsp. Homalodisca coagulata.